We begin with the raw amino-acid sequence, 470 residues long: Proline--tRNA ligase (470 aa).

It belongs to the class-II aminoacyl-tRNA synthetase family. ProS type 3 subfamily. Homodimer.

It localises to the cytoplasm. The enzyme catalyses tRNA(Pro) + L-proline + ATP = L-prolyl-tRNA(Pro) + AMP + diphosphate. In terms of biological role, catalyzes the attachment of proline to tRNA(Pro) in a two-step reaction: proline is first activated by ATP to form Pro-AMP and then transferred to the acceptor end of tRNA(Pro). The polypeptide is Proline--tRNA ligase (Malacoplasma penetrans (strain HF-2) (Mycoplasma penetrans)).